A 244-amino-acid polypeptide reads, in one-letter code: 7-cyano-7-deazaguanine synthase (244 aa).

Residue 14 to 24 participates in ATP binding; it reads FSGGQDSATCV. Zn(2+)-binding residues include cysteine 202, cysteine 217, cysteine 220, and cysteine 223.

Belongs to the QueC family. Zn(2+) serves as cofactor.

It catalyses the reaction 7-carboxy-7-deazaguanine + NH4(+) + ATP = 7-cyano-7-deazaguanine + ADP + phosphate + H2O + H(+). Its pathway is purine metabolism; 7-cyano-7-deazaguanine biosynthesis. In terms of biological role, catalyzes the ATP-dependent conversion of 7-carboxy-7-deazaguanine (CDG) to 7-cyano-7-deazaguanine (preQ(0)). This chain is 7-cyano-7-deazaguanine synthase, found in Burkholderia cenocepacia (strain HI2424).